A 318-amino-acid polypeptide reads, in one-letter code: uncharacterized protein (318 aa).

This is an uncharacterized protein from Escherichia coli (strain K12).